We begin with the raw amino-acid sequence, 334 residues long: MKITVLGAGSWGTTLAVLLAGKGASVRLWAHRPEFARELEASHENVRYLPGVTIPDSIRIEDDIVRAVQGASIIVTAVPSQALRETLALFRDVSLSDTIIVNVAKGIELDTGKRLSEVIPEVLPAVSPAQVAVLYGPSHAEEVSDKQPTTVVAASSCLETAEKVQEAFHTSMFRVYVNTDIIGVEIAGSVKNIIAIAAGISDGIGYGDNAKAAIITRGLAEMSRLAVSLGGEPMTVSGLSGIGDLVVTCLSRHSRNRYLGEQIGKGRSLEEVISHMNMVAEGVSTTKAVFSLSSRLGVDMPITSAVYEMLFENKPAEQAILDLMTREPKKELGY.

Positions 10, 11, 31, 32, and 105 each coordinate NADPH. Sn-glycerol 3-phosphate contacts are provided by Lys105, Gly136, and Ser138. Residue Ala140 participates in NADPH binding. Residues Lys191, Asp244, Ser254, Arg255, and Asn256 each contribute to the sn-glycerol 3-phosphate site. Lys191 acts as the Proton acceptor in catalysis. Position 255 (Arg255) interacts with NADPH. Residues Val279 and Glu281 each coordinate NADPH.

Belongs to the NAD-dependent glycerol-3-phosphate dehydrogenase family.

The protein localises to the cytoplasm. It catalyses the reaction sn-glycerol 3-phosphate + NAD(+) = dihydroxyacetone phosphate + NADH + H(+). It carries out the reaction sn-glycerol 3-phosphate + NADP(+) = dihydroxyacetone phosphate + NADPH + H(+). Its pathway is membrane lipid metabolism; glycerophospholipid metabolism. Functionally, catalyzes the reduction of the glycolytic intermediate dihydroxyacetone phosphate (DHAP) to sn-glycerol 3-phosphate (G3P), the key precursor for phospholipid synthesis. The sequence is that of Glycerol-3-phosphate dehydrogenase [NAD(P)+] from Chlorobium phaeobacteroides (strain BS1).